Reading from the N-terminus, the 984-residue chain is Lateral signaling target protein 2 homolog (984 aa).

4 disordered regions span residues Pro308–Glu462, Tyr508–Ser527, Arg539–Ser642, and Asp749–Ala900. Composition is skewed to low complexity over residues Thr326–Thr356, Asn369–Asn380, Thr387–Ala404, and Pro412–Trp433. Acidic residues predominate over residues Ser434–Glu462. Ser544 and Ser545 each carry phosphoserine. The span at Arg571–Arg611 shows a compositional bias: basic residues. Residues Leu630 to Ser642 show a composition bias toward low complexity. 2 stretches are compositionally biased toward polar residues: residues Ala760–Leu779 and Ser789–Leu806. Ser805 bears the Phosphoserine mark. Low complexity-rich tracts occupy residues Ala811–Ala869 and Pro886–Pro899. The FYVE-type zinc-finger motif lies at Asp904 to Val964. Zn(2+) contacts are provided by Cys910, Cys913, Cys926, Cys929, Cys934, Cys937, Cys956, and Cys959.

Belongs to the lst-2 family.

In terms of biological role, negative regulator of epidermal growth factor receptor (EGFR) signaling. The chain is Lateral signaling target protein 2 homolog from Drosophila yakuba (Fruit fly).